Here is a 1048-residue protein sequence, read N- to C-terminus: Transcription factor mef2A (1048 aa).

The 61-residue stretch at 1–61 (MGRNKITIEK…NKLFQYSSRD (61 aa)) folds into the MADS-box domain. Residues 74–85 (DNTRKNLTNQDY) show a composition bias toward polar residues. Disordered stretches follow at residues 74 to 263 (DNTR…QAAQ), 294 to 339 (QQQH…QQQQ), 386 to 812 (GIYG…NINT), and 916 to 1048 (LLLT…EPKN). The span at 97-110 (DDEDGDDDGDEDLG) shows a compositional bias: acidic residues. Low complexity-rich tracts occupy residues 130–205 (NNNN…NANH), 212–263 (GNSA…QAAQ), 294–303 (QQQHQQQQQN), 327–339 (QQQQQMQHSQQQQ), 393–437 (PPQM…IMNK), 446–466 (YYDYNGYPQQQQPPQNYNSNG), and 481–500 (QQQSANPYIQQQQQPQHQSP). Residues 249 to 304 (NNNSNGYQQQQQAAQQAVQQAQMAQQMHLQQQQQYQQLQHIQQQQQQQHQQQQQNM) are a coiled coil. A compositionally biased stretch (polar residues) spans 506 to 522 (YSPQQQSPVLNSQNGHH). Positions 529-539 (HQMHHQQHQHQ) are enriched in basic residues. Low complexity predominate over residues 540–593 (QHPQMQQQQQQQQQHQQHPQMQQIQQQQHPQMQQHQQHQQQHPQMQQQHMNNHQ). Polar residues predominate over residues 600-618 (NSSPEINSQKNVHSSPLIM). A compositionally biased stretch (low complexity) spans 619 to 699 (NSNNNNNNNN…NSNNGNNNNN (81 aa)). Over residues 715-736 (SSPTIPEQPSINVSTSSNSAHV) the composition is skewed to polar residues. Composition is skewed to low complexity over residues 738 to 802 (NNIT…SSST), 924 to 960 (SNNSNSSNNNNNNNNNNNNTNNNNISGNGSSSSSSSS), and 982 to 1029 (NNNN…NNSN).

It is found in the nucleus. Its function is as follows. Transcription factor that regulates cell differentiation during development. Seems to negatively regulate prestalk gene expression and positively regulate prespore gene expression. This chain is Transcription factor mef2A (mef2A), found in Dictyostelium discoideum (Social amoeba).